A 455-amino-acid polypeptide reads, in one-letter code: tRNA modification GTPase MnmE (455 aa).

Positions 24, 81, and 120 each coordinate (6S)-5-formyl-5,6,7,8-tetrahydrofolate. The region spanning 216-378 is the TrmE-type G domain; it reads GMTVVIAGRP…LREHLKACMG (163 aa). A K(+)-binding site is contributed by N226. Residues 226 to 231, 245 to 251, 270 to 273, 335 to 338, and 359 to 361 each bind GTP; these read NAGKSS, TDIAGTT, DTAG, NKAD, and SAR. Mg(2+) is bound at residue S230. 3 residues coordinate K(+): T245, I247, and T250. T251 provides a ligand contact to Mg(2+). K455 is a binding site for (6S)-5-formyl-5,6,7,8-tetrahydrofolate.

This sequence belongs to the TRAFAC class TrmE-Era-EngA-EngB-Septin-like GTPase superfamily. TrmE GTPase family. In terms of assembly, homodimer. Heterotetramer of two MnmE and two MnmG subunits. K(+) is required as a cofactor.

It is found in the cytoplasm. Its function is as follows. Exhibits a very high intrinsic GTPase hydrolysis rate. Involved in the addition of a carboxymethylaminomethyl (cmnm) group at the wobble position (U34) of certain tRNAs, forming tRNA-cmnm(5)s(2)U34. In Pseudomonas paraeruginosa (strain DSM 24068 / PA7) (Pseudomonas aeruginosa (strain PA7)), this protein is tRNA modification GTPase MnmE.